The chain runs to 350 residues: Phosphotriesterase-related protein (350 aa).

6 residues coordinate a divalent metal cation: histidine 22, histidine 24, glutamate 169, histidine 201, histidine 230, and aspartate 298.

Belongs to the metallo-dependent hydrolases superfamily. Phosphotriesterase family. It depends on a divalent metal cation as a cofactor.

The polypeptide is Phosphotriesterase-related protein (Drosophila persimilis (Fruit fly)).